We begin with the raw amino-acid sequence, 248 residues long: Oligo(A)/oligo(T)-binding protein (248 aa).

A DNA-binding region spans residues 1-36 (MAKTLAQGRKPGSGRKPGKGKTLREGRKPGSGRRRR). 2 disordered regions span residues 1–127 (MAKT…LQQQ) and 219–248 (TAAS…NATI). 3 repeat units span residues 8-12 (GRKPG), 14-18 (GRKPG), and 26-30 (GRKPG). Residues 8–30 (GRKPGSGRKPGKGKTLREGRKPG) are 3 X 5 AA repeats of G-R-K-P-G. Positions 12 to 21 (GSGRKPGKGK) are enriched in basic residues. A compositionally biased stretch (basic and acidic residues) spans 37–71 (QDTGGKETDGSQQDQESRLISSRDMEAVDALRELT). Composition is skewed to low complexity over residues 72 to 100 (HSPS…LPPS) and 111 to 127 (QQQQ…LQQQ).

In terms of assembly, binds as a dimer or higher oligomer.

Its function is as follows. DNA-binding protein that recognizes oligo(A).oligo(T) tracts (A.T DNA). Can bind to any 11 bp sequence in which 10 bases conform to an uninterrupted oligo(A).oligo(T) tract. In Saccharomyces cerevisiae (strain ATCC 204508 / S288c) (Baker's yeast), this protein is Oligo(A)/oligo(T)-binding protein (DAT1).